The sequence spans 498 residues: Putative ABC transporter ATP-binding protein MM_2387 (498 aa).

ABC transporter domains are found at residues 2–242 (IELR…TSKS) and 258–490 (ISIK…VEEK). Residues 36 to 43 (GHSAAGKT) and 290 to 297 (GENGSGKT) contribute to the ATP site.

The protein belongs to the ABC transporter superfamily.

The protein localises to the cell membrane. Its function is as follows. Probably part of an ABC transporter complex. Responsible for energy coupling to the transport system. The polypeptide is Putative ABC transporter ATP-binding protein MM_2387 (Methanosarcina mazei (strain ATCC BAA-159 / DSM 3647 / Goe1 / Go1 / JCM 11833 / OCM 88) (Methanosarcina frisia)).